A 147-amino-acid polypeptide reads, in one-letter code: Anti-sigma F factor (147 aa).

Belongs to the anti-sigma-factor family.

It carries out the reaction L-seryl-[protein] + ATP = O-phospho-L-seryl-[protein] + ADP + H(+). The catalysed reaction is L-threonyl-[protein] + ATP = O-phospho-L-threonyl-[protein] + ADP + H(+). In terms of biological role, binds to sigma F and blocks its ability to form an RNA polymerase holoenzyme (E-sigma F). Phosphorylates SpoIIAA on a serine residue. This phosphorylation may enable SpoIIAA to act as an anti-anti-sigma factor that counteracts SpoIIAB and thus releases sigma F from inhibition. The protein is Anti-sigma F factor of Priestia megaterium (Bacillus megaterium).